A 31-amino-acid polypeptide reads, in one-letter code: Photosystem II reaction center protein T (31 aa).

A helical membrane pass occupies residues A3 to F23.

Belongs to the PsbT family. In terms of assembly, PSII is composed of 1 copy each of membrane proteins PsbA, PsbB, PsbC, PsbD, PsbE, PsbF, PsbH, PsbI, PsbJ, PsbK, PsbL, PsbM, PsbT, PsbX, PsbY, PsbZ, Psb30/Ycf12, at least 3 peripheral proteins of the oxygen-evolving complex and a large number of cofactors. It forms dimeric complexes.

It localises to the plastid. It is found in the chloroplast thylakoid membrane. Found at the monomer-monomer interface of the photosystem II (PS II) dimer, plays a role in assembly and dimerization of PSII. PSII is a light-driven water plastoquinone oxidoreductase, using light energy to abstract electrons from H(2)O, generating a proton gradient subsequently used for ATP formation. The protein is Photosystem II reaction center protein T of Gracilaria tenuistipitata var. liui (Red alga).